A 364-amino-acid polypeptide reads, in one-letter code: Fructose-bisphosphate aldolase A (364 aa).

Residue Y5 is modified to Phosphotyrosine. Position 9 is a phosphothreonine (T9). Phosphoserine occurs at positions 36 and 39. K42 bears the N6-acetyllysine; alternate mark. K42 participates in a covalent cross-link: Glycyl lysine isopeptide (Lys-Gly) (interchain with G-Cter in SUMO1); alternate. K42 is covalently cross-linked (Glycyl lysine isopeptide (Lys-Gly) (interchain with G-Cter in SUMO2); alternate). R43 is a binding site for beta-D-fructose 1,6-bisphosphate. S46 bears the Phosphoserine mark. K99 carries the post-translational modification N6-(2-hydroxyisobutyryl)lysine. N6-acetyllysine is present on K108. An N6-acetyllysine; alternate modification is found at K111. An N6-malonyllysine; alternate modification is found at K111. Residue S132 is modified to Phosphoserine. K147 carries the post-translational modification N6-(2-hydroxyisobutyryl)lysine. E188 (proton acceptor) is an active-site residue. Catalysis depends on K230, which acts as the Schiff-base intermediate with dihydroxyacetone-P. At S272 the chain carries Phosphoserine. Residues 272–274 (SGG), S301, and R304 contribute to the beta-D-fructose 1,6-bisphosphate site. The residue at position 312 (K312) is an N6-malonyllysine. K330 carries the post-translational modification N6-acetyllysine.

The protein belongs to the class I fructose-bisphosphate aldolase family. As to quaternary structure, homotetramer. Interacts with SNX9 and WAS. Interacts with FBP2; the interaction blocks FBP2 inhibition by physiological concentrations of AMP and reduces inhibition by Ca(2+).

It localises to the cytoplasm. The protein localises to the myofibril. Its subcellular location is the sarcomere. The protein resides in the i band. It is found in the m line. The enzyme catalyses beta-D-fructose 1,6-bisphosphate = D-glyceraldehyde 3-phosphate + dihydroxyacetone phosphate. The protein operates within carbohydrate degradation; glycolysis; D-glyceraldehyde 3-phosphate and glycerone phosphate from D-glucose: step 4/4. Catalyzes the reversible conversion of beta-D-fructose 1,6-bisphosphate (FBP) into two triose phosphate and plays a key role in glycolysis and gluconeogenesis. In addition, may also function as scaffolding protein. The protein is Fructose-bisphosphate aldolase A (ALDOA) of Pan troglodytes (Chimpanzee).